Consider the following 803-residue polypeptide: Translation initiation factor IF-2 (803 aa).

Disordered stretches follow at residues 95–125 (PVVE…EKAE) and 138–178 (EVKE…EREE). A compositionally biased stretch (polar residues) spans 111–121 (VPLTSDTTNLN). The span at 138–155 (EVKEEAKKTPSEKKETPK) shows a compositional bias: basic and acidic residues. Positions 156–167 (KGPRKETRRSRK) are enriched in basic residues. Residues 168–178 (PDKEDKWEREE) show a composition bias toward basic and acidic residues. The region spanning 302–471 (PRAPVVTIMG…LLQAEVLELK (170 aa)) is the tr-type G domain. Positions 311–318 (GHVDHGKT) are G1. 311 to 318 (GHVDHGKT) lines the GTP pocket. The G2 stretch occupies residues 336-340 (GITQH). The G3 stretch occupies residues 357-360 (DTPG). Residues 357 to 361 (DTPGH) and 411 to 414 (NKID) each bind GTP. The tract at residues 411–414 (NKID) is G4. Positions 447-449 (SAK) are G5.

The protein belongs to the TRAFAC class translation factor GTPase superfamily. Classic translation factor GTPase family. IF-2 subfamily.

It localises to the cytoplasm. One of the essential components for the initiation of protein synthesis. Protects formylmethionyl-tRNA from spontaneous hydrolysis and promotes its binding to the 30S ribosomal subunits. Also involved in the hydrolysis of GTP during the formation of the 70S ribosomal complex. The protein is Translation initiation factor IF-2 of Coxiella burnetii (strain CbuK_Q154) (Coxiella burnetii (strain Q154)).